The primary structure comprises 177 residues: Ribulose bisphosphate carboxylase small subunit, chloroplastic 5 (177 aa).

The N-terminal 56 residues, 1–56 (MASSMMASTAAVARAGPAQSSMVAPFNGLRSSVAFPATRKANNDLSTLPSNGGRVS), are a transit peptide targeting the chloroplast.

This sequence belongs to the RuBisCO small chain family. As to quaternary structure, heterohexadecamer of 8 large and 8 small subunits.

Its subcellular location is the plastid. It is found in the chloroplast. In terms of biological role, ruBisCO catalyzes two reactions: the carboxylation of D-ribulose 1,5-bisphosphate, the primary event in carbon dioxide fixation, as well as the oxidative fragmentation of the pentose substrate. Both reactions occur simultaneously and in competition at the same active site. Although the small subunit is not catalytic it is essential for maximal activity. The protein is Ribulose bisphosphate carboxylase small subunit, chloroplastic 5 of Lemna gibba (Swollen duckweed).